Consider the following 182-residue polypeptide: Hypoxanthine/guanine phosphoribosyltransferase (182 aa).

This sequence belongs to the purine/pyrimidine phosphoribosyltransferase family. Archaeal HPRT subfamily. As to quaternary structure, homodimer.

It is found in the cytoplasm. The enzyme catalyses IMP + diphosphate = hypoxanthine + 5-phospho-alpha-D-ribose 1-diphosphate. It carries out the reaction GMP + diphosphate = guanine + 5-phospho-alpha-D-ribose 1-diphosphate. It participates in purine metabolism; IMP biosynthesis via salvage pathway; IMP from hypoxanthine: step 1/1. Catalyzes a salvage reaction resulting in the formation of IMP that is energically less costly than de novo synthesis. The polypeptide is Hypoxanthine/guanine phosphoribosyltransferase (Methanospirillum hungatei JF-1 (strain ATCC 27890 / DSM 864 / NBRC 100397 / JF-1)).